A 200-amino-acid chain; its full sequence is Pyridoxamine 5'-phosphate oxidase homolog (200 aa).

FMN-binding residues include Phe60, Lys68, and Asn125.

This sequence belongs to the pyridoxamine 5'-phosphate oxidase family. It depends on FMN as a cofactor.

Its subcellular location is the cytoplasm. It is found in the nucleus. The polypeptide is Pyridoxamine 5'-phosphate oxidase homolog (Saccharomyces cerevisiae (strain ATCC 204508 / S288c) (Baker's yeast)).